Consider the following 286-residue polypeptide: ATP synthase gamma chain (286 aa).

It belongs to the ATPase gamma chain family. In terms of assembly, F-type ATPases have 2 components, CF(1) - the catalytic core - and CF(0) - the membrane proton channel. CF(1) has five subunits: alpha(3), beta(3), gamma(1), delta(1), epsilon(1). CF(0) has three main subunits: a, b and c.

It localises to the cell inner membrane. Functionally, produces ATP from ADP in the presence of a proton gradient across the membrane. The gamma chain is believed to be important in regulating ATPase activity and the flow of protons through the CF(0) complex. The chain is ATP synthase gamma chain from Dechloromonas aromatica (strain RCB).